Here is a 132-residue protein sequence, read N- to C-terminus: Agouti-signaling protein (132 aa).

The signal sequence occupies residues 1 to 22 (MDVTRLLLATLLVFLCFFAAYS). N-linked (GlcNAc...) asparagine glycosylation is present at asparagine 39. The interval 61–93 (KISRKEAEKKRSSKKEASKQKVARPRTPLSVPC) is disordered. The segment covering 64-79 (RKEAEKKRSSKKEASK) has biased composition (basic and acidic residues). Intrachain disulfides connect cysteine 93/cysteine 108, cysteine 100/cysteine 114, cysteine 107/cysteine 125, cysteine 111/cysteine 132, and cysteine 116/cysteine 123. Positions 93–132 (CVSTRGSCKPPAPACCHPCASCQCRFFRSACSCRVLNVNC) constitute an Agouti domain.

The protein resides in the secreted. Its function is as follows. Involved in the regulation of melanogenesis. The binding of ASP to MC1R precludes alpha-MSH initiated signaling and thus blocks production of cAMP, leading to a down-regulation of eumelanogenesis (brown/black pigment) and thus increasing synthesis of pheomelanin (yellow/red pigment). The protein is Agouti-signaling protein (ASIP) of Callithrix geoffroyi (Geoffroy's marmoset).